The chain runs to 207 residues: uncharacterized protein (207 aa).

It is found in the mitochondrion. This is an uncharacterized protein from Marchantia polymorpha (Common liverwort).